We begin with the raw amino-acid sequence, 160 residues long: 2-amino-4-hydroxy-6-hydroxymethyldihydropteridine pyrophosphokinase (160 aa).

This sequence belongs to the HPPK family.

It carries out the reaction 6-hydroxymethyl-7,8-dihydropterin + ATP = (7,8-dihydropterin-6-yl)methyl diphosphate + AMP + H(+). It participates in cofactor biosynthesis; tetrahydrofolate biosynthesis; 2-amino-4-hydroxy-6-hydroxymethyl-7,8-dihydropteridine diphosphate from 7,8-dihydroneopterin triphosphate: step 4/4. Its function is as follows. Catalyzes the transfer of pyrophosphate from adenosine triphosphate (ATP) to 6-hydroxymethyl-7,8-dihydropterin, an enzymatic step in folate biosynthesis pathway. The chain is 2-amino-4-hydroxy-6-hydroxymethyldihydropteridine pyrophosphokinase (folK) from Aquifex aeolicus (strain VF5).